We begin with the raw amino-acid sequence, 411 residues long: Na(+)-translocating NADH-quinone reductase subunit B (411 aa).

3 helical membrane-spanning segments follow: residues 56–76 (MMIT…YNVG), 120–140 (ALGA…CTIW), and 166–186 (IVPP…GIIV). Thr-233 is modified (FMN phosphoryl threonine). 5 helical membrane-spanning segments follow: residues 272-292 (VSTL…IAAW), 294-314 (IIAG…LIGS), 319-339 (MFSM…GMVF), 348-368 (SFTN…AVLI), and 378-398 (GMML…YIVV).

It belongs to the NqrB/RnfD family. As to quaternary structure, composed of six subunits; NqrA, NqrB, NqrC, NqrD, NqrE and NqrF. FMN serves as cofactor.

The protein localises to the cell inner membrane. The enzyme catalyses a ubiquinone + n Na(+)(in) + NADH + H(+) = a ubiquinol + n Na(+)(out) + NAD(+). In terms of biological role, NQR complex catalyzes the reduction of ubiquinone-1 to ubiquinol by two successive reactions, coupled with the transport of Na(+) ions from the cytoplasm to the periplasm. NqrA to NqrE are probably involved in the second step, the conversion of ubisemiquinone to ubiquinol. The polypeptide is Na(+)-translocating NADH-quinone reductase subunit B (Haemophilus influenzae (strain 86-028NP)).